A 354-amino-acid chain; its full sequence is MTTVIQRRSTSNVWEQFCEWVTSTDNRLYIGWFGVLMIPTLLTATTCFIIAFIGAPPVDIDGIREPVSGSLLYGNNIITGAVVPSSAAIGLHFYPIWEAASLDEWLYNGGPYQLIVLHFLIGVFCYMGREWELSYRLGMRPWIAVAYSAPVAAATAVFLIYPIGQGSFSDGMPLGISGTFNFMLVFQAEHNILMHPFHQLGVAGVFGGALFSAMHGSLVTSSLIRETSEEESQNLGYKFGQEEETYNIVAAHGYFGRLIFQYASFNNSRSLHFFLAAWPVIGIWFTALGISIMAFNLNGFNFNQSIVDSNGRVVGTWADVLNRANLGMEVMHERNAHNFPLDLAAVEVAPAIRG.

Transmembrane regions (helical) follow at residues Tyr-29–Thr-46, His-118–Leu-133, and Trp-142–Ala-156. His-118 lines the chlorophyll a pocket. Residue Tyr-126 participates in pheophytin a binding. The [CaMn4O5] cluster site is built by Asp-170 and Glu-189. The chain crosses the membrane as a helical span at residues Phe-197–Leu-218. His-198 serves as a coordination point for chlorophyll a. Residues His-215 and Ser-264 to Phe-265 each bind a quinone. Residue His-215 participates in Fe cation binding. His-272 is a binding site for Fe cation. The chain crosses the membrane as a helical span at residues Phe-274 to Leu-288. Positions 332, 333, 342, and 344 each coordinate [CaMn4O5] cluster. Positions Ala-345 to Gly-354 are excised as a propeptide.

It belongs to the reaction center PufL/M/PsbA/D family. As to quaternary structure, PSII is composed of 1 copy each of membrane proteins PsbA, PsbB, PsbC, PsbD, PsbE, PsbF, PsbH, PsbI, PsbJ, PsbK, PsbL, PsbM, PsbT, PsbX, PsbY, PsbZ, Psb30/Ycf12, peripheral proteins PsbO, CyanoQ (PsbQ), PsbU, PsbV and a large number of cofactors. It forms dimeric complexes. The D1/D2 heterodimer binds P680, chlorophylls that are the primary electron donor of PSII, and subsequent electron acceptors. It shares a non-heme iron and each subunit binds pheophytin, quinone, additional chlorophylls, carotenoids and lipids. D1 provides most of the ligands for the Mn4-Ca-O5 cluster of the oxygen-evolving complex (OEC). There is also a Cl(-1) ion associated with D1 and D2, which is required for oxygen evolution. The PSII complex binds additional chlorophylls, carotenoids and specific lipids. is required as a cofactor. Tyr-161 forms a radical intermediate that is referred to as redox-active TyrZ, YZ or Y-Z. In terms of processing, C-terminally processed by CtpA; processing is essential to allow assembly of the oxygen-evolving complex and thus photosynthetic growth.

The protein resides in the cellular thylakoid membrane. It catalyses the reaction 2 a plastoquinone + 4 hnu + 2 H2O = 2 a plastoquinol + O2. In terms of biological role, photosystem II (PSII) is a light-driven water:plastoquinone oxidoreductase that uses light energy to abstract electrons from H(2)O, generating O(2) and a proton gradient subsequently used for ATP formation. It consists of a core antenna complex that captures photons, and an electron transfer chain that converts photonic excitation into a charge separation. The D1/D2 (PsbA/PsbD) reaction center heterodimer binds P680, the primary electron donor of PSII as well as several subsequent electron acceptors. This is Photosystem II protein D1 1 from Synechococcus sp. (strain JA-3-3Ab) (Cyanobacteria bacterium Yellowstone A-Prime).